The chain runs to 121 residues: uncharacterized protein (121 aa).

Residues 100–121 form a disordered region; the sequence is KSFSNTKDGKKNDDDNNSSSKS.

This is an uncharacterized protein from Mycoplasma pneumoniae (strain ATCC 29342 / M129 / Subtype 1) (Mycoplasmoides pneumoniae).